Consider the following 229-residue polypeptide: Peptidase E (229 aa).

Catalysis depends on charge relay system residues serine 120, aspartate 135, and histidine 157.

Belongs to the peptidase S51 family.

Its subcellular location is the cytoplasm. It carries out the reaction Dipeptidase E catalyzes the hydrolysis of dipeptides Asp-|-Xaa. It does not act on peptides with N-terminal Glu, Asn or Gln, nor does it cleave isoaspartyl peptides.. In terms of biological role, hydrolyzes dipeptides containing N-terminal aspartate residues. May play a role in allowing the cell to use peptide aspartate to spare carbon otherwise required for the synthesis of the aspartate family of amino acids. The sequence is that of Peptidase E from Salmonella newport (strain SL254).